We begin with the raw amino-acid sequence, 340 residues long: MSDSEEEIKQNTDPVDNAWSLKIPAFRQEDNPHGMVEESSFATLFPKYREKYLREVWPLVEQCVAEHQLKAELDLVEGSMVVKTTRKTWDPYIIIKSRDMIKLMARSVPFEQAKRVLQDDIGCDIIKIGNLVHKKEKFVKRRQRLIGPNGATLKSIELLTDCYVLVQGNTVSALGPYKGLQQVRDIVLETMNNVHPIYNIKALMIKRELMKDPKLANEDWSRFLPKFKNKNISKRKQPKSKKPKKEYTPFPPAQPESKIDKQLASGEYFLNQEQKQAKRNQERSAKQADAAKKQDERRNKDFVPPTEEAPSRKRQAEDSSKVDVKALKAKLVKANKKSKS.

A KH domain is found at 124-192 (DIIKIGNLVH…VRDIVLETMN (69 aa)). Residues 228-244 (KNKNISKRKQPKSKKPK) are compositionally biased toward basic residues. 2 disordered regions span residues 228–259 (KNKN…ESKI) and 271–324 (NQEQ…KVDV). The stretch at 269 to 302 (FLNQEQKQAKRNQERSAKQADAAKKQDERRNKDF) forms a coiled coil. Composition is skewed to basic and acidic residues over residues 275–301 (KQAK…RNKD) and 309–324 (APSR…KVDV).

It belongs to the KRR1 family. As to quaternary structure, monomer. Component of the ribosomal small subunit (SSU) processome.

Its subcellular location is the nucleus. It is found in the nucleolus. Required for 40S ribosome biogenesis. Involved in nucleolar processing of pre-18S ribosomal RNA and ribosome assembly. Binds to RNA. Required for female germline development, cell viability during eye development and for survival of dividing cells and epithelial cells during early wing disk development. This is KRR1 small subunit processome component homolog from Drosophila persimilis (Fruit fly).